A 132-amino-acid polypeptide reads, in one-letter code: Fatty acid-binding protein, adipocyte (132 aa).

At Cys-2 the chain carries N-acetylcysteine. Phosphoserine is present on Ser-13. Tyr-20 is modified (phosphotyrosine; by Tyr-kinases). The Nuclear localization signal motif lies at 22 to 32 (KEVGVGFATRK). 127–129 (RVY) contacts a fatty acid.

It belongs to the calycin superfamily. Fatty-acid binding protein (FABP) family. In terms of assembly, monomer. Homodimer. Interacts with PPARG.

It is found in the cytoplasm. The protein localises to the nucleus. In terms of biological role, lipid transport protein in adipocytes. Binds both long chain fatty acids and retinoic acid. Delivers long-chain fatty acids and retinoic acid to their cognate receptors in the nucleus. This is Fatty acid-binding protein, adipocyte (Fabp4) from Mus musculus (Mouse).